Reading from the N-terminus, the 562-residue chain is MTTTTTVKSDIEIAQEASMKKIQEIAADLNILEDELEPYGHYKGKLSLDIFKRLQDEKDGKVVLVTAINPTPAGEGKSTVTVGLGQAFNKIGKKTVIALREPSLGPTMGLKGGAAGGGFSQVVPMEDINLHFTGDIHAITTANNALAAFIDNHIQQGNTLGIDTRKIVWKRCVDLNDRALRNVVIGLGGPVQGVPREDGFDITVASEIMAVFCLATDIQDLKARLSRIVVAYNFANQPVTVKDLGVEGALTLLLKDALKPNLVQTLENTPAIIHGGPFANIAHGCNSVIATTMAAKLGDYVITEAGFGADLGAEKFLDIKARAAGIKPEAVVIVATIRALKMHGGVAKDQLKEENVDALAKGMENLQKHVETIQSFGVPFVIAINKFITDTDAEVTYLQEWCNERGYAVSLTEVWEKGGQGGVDLAEKVLKEIEKGENNYAPLYELELPLEEKIRTIAQKVYGAKDIEFAPKARKQLAQYEGEGWSNLPVCMAKTQYSLSDDATKLGRPSDFIVTIRELKPSIGAGFIVALTGTMLTMPGLPKQPAALQMDVNEDGKAVGLF.

Residue 71-78 (TPAGEGKS) participates in ATP binding.

Belongs to the formate--tetrahydrofolate ligase family.

The enzyme catalyses (6S)-5,6,7,8-tetrahydrofolate + formate + ATP = (6R)-10-formyltetrahydrofolate + ADP + phosphate. Its pathway is one-carbon metabolism; tetrahydrofolate interconversion. The polypeptide is Formate--tetrahydrofolate ligase (Bacillus cereus (strain G9842)).